A 135-amino-acid polypeptide reads, in one-letter code: ATP synthase epsilon chain (135 aa).

It belongs to the ATPase epsilon chain family. In terms of assembly, F-type ATPases have 2 components, CF(1) - the catalytic core - and CF(0) - the membrane proton channel. CF(1) has five subunits: alpha(3), beta(3), gamma(1), delta(1), epsilon(1). CF(0) has three main subunits: a, b and c.

It is found in the cell inner membrane. Produces ATP from ADP in the presence of a proton gradient across the membrane. This is ATP synthase epsilon chain from Rhodopseudomonas palustris (strain BisA53).